The following is a 137-amino-acid chain: MQRTLSIIKPDAVKKNVVGKIIDRFESNGLRIAAAKKIKLSKCDAKAFYAVHKDRPFFNDLVDFMVSGPVVVMVLEGENAVAKNRELMGATNPKEAAPGTIRADFADSIDANAVHGSDSLENAVNEINFFFASREIC.

ATP-binding residues include Lys9, Phe57, Arg85, Thr91, Arg102, and Asn112. His115 serves as the catalytic Pros-phosphohistidine intermediate.

Belongs to the NDK family. As to quaternary structure, homotetramer. It depends on Mg(2+) as a cofactor.

It localises to the cytoplasm. The enzyme catalyses a 2'-deoxyribonucleoside 5'-diphosphate + ATP = a 2'-deoxyribonucleoside 5'-triphosphate + ADP. The catalysed reaction is a ribonucleoside 5'-diphosphate + ATP = a ribonucleoside 5'-triphosphate + ADP. Functionally, major role in the synthesis of nucleoside triphosphates other than ATP. The ATP gamma phosphate is transferred to the NDP beta phosphate via a ping-pong mechanism, using a phosphorylated active-site intermediate. The chain is Nucleoside diphosphate kinase from Campylobacter concisus (strain 13826).